Consider the following 327-residue polypeptide: Pyruvate dehydrogenase E1 component subunit beta (327 aa).

Position 60 (Glu-60) interacts with thiamine diphosphate. Positions 113, 161, 162, and 164 each coordinate K(+).

Heterodimer of an alpha and a beta chain. The cofactor is thiamine diphosphate.

It is found in the plastid. The protein resides in the chloroplast. The catalysed reaction is N(6)-[(R)-lipoyl]-L-lysyl-[protein] + pyruvate + H(+) = N(6)-[(R)-S(8)-acetyldihydrolipoyl]-L-lysyl-[protein] + CO2. The pyruvate dehydrogenase complex catalyzes the overall conversion of pyruvate to acetyl-CoA and CO(2). It contains multiple copies of three enzymatic components: pyruvate dehydrogenase (E1), dihydrolipoamide acetyltransferase (E2) and lipoamide dehydrogenase (E3). The chain is Pyruvate dehydrogenase E1 component subunit beta (pdhB) from Cyanidium caldarium (Red alga).